The chain runs to 569 residues: Protein angel homolog 2 (569 aa).

Disordered regions lie at residues 1–22, 63–92, and 109–155; these read MRKG…GVSP, LQHP…WSSW, and GLME…WLRN. Positions 63-72 are enriched in polar residues; sequence LQHPSSSFST. The span at 139–150 shows a compositional bias: low complexity; that stretch reads PPKGSRSPKGSP.

This sequence belongs to the CCR4/nocturin family.

The chain is Protein angel homolog 2 (angel2) from Danio rerio (Zebrafish).